Here is a 340-residue protein sequence, read N- to C-terminus: Phosphoribosylformylglycinamidine cyclo-ligase (340 aa).

The protein belongs to the AIR synthase family.

The protein resides in the cytoplasm. The enzyme catalyses 2-formamido-N(1)-(5-O-phospho-beta-D-ribosyl)acetamidine + ATP = 5-amino-1-(5-phospho-beta-D-ribosyl)imidazole + ADP + phosphate + H(+). It participates in purine metabolism; IMP biosynthesis via de novo pathway; 5-amino-1-(5-phospho-D-ribosyl)imidazole from N(2)-formyl-N(1)-(5-phospho-D-ribosyl)glycinamide: step 2/2. This chain is Phosphoribosylformylglycinamidine cyclo-ligase, found in Streptococcus pyogenes serotype M1.